Reading from the N-terminus, the 321-residue chain is Probable arabinan endo-1,5-alpha-L-arabinosidase A (321 aa).

The first 19 residues, 1–19 (MHPSTFVTTIACLAGLAHG), serve as a signal peptide directing secretion. Aspartate 34 (proton acceptor) is an active-site residue. The Proton donor role is filled by glutamate 200.

The protein belongs to the glycosyl hydrolase 43 family.

It localises to the secreted. It catalyses the reaction Endohydrolysis of (1-&gt;5)-alpha-arabinofuranosidic linkages in (1-&gt;5)-arabinans.. It participates in glycan metabolism; L-arabinan degradation. Functionally, endo-1,5-alpha-L-arabinanase involved in degradation of pectin. Its preferred substrate is linear 1,5-alpha-L-arabinan. The chain is Probable arabinan endo-1,5-alpha-L-arabinosidase A (abnA) from Aspergillus clavatus (strain ATCC 1007 / CBS 513.65 / DSM 816 / NCTC 3887 / NRRL 1 / QM 1276 / 107).